We begin with the raw amino-acid sequence, 680 residues long: Chondroitin proteoglycan 4 (680 aa).

A signal peptide spans 1–18 (MLRVNLLILLCFVPFSLN). Asn-42, Asn-59, Asn-72, Asn-167, Asn-205, Asn-458, Asn-472, Asn-486, Asn-498, Asn-526, Asn-527, Asn-556, and Asn-604 each carry an N-linked (GlcNAc...) asparagine glycan. Positions 460–680 (TKKAETTKKS…PLTTTLHELY (221 aa)) are disordered. Residues 484 to 500 (AANTTAETTKTTSANIT) show a composition bias toward low complexity. The span at 520-530 (SLDTSGNNSTV) shows a compositional bias: polar residues. Low complexity-rich tracts occupy residues 633–647 (GEASGEASGEASGEV) and 654–669 (SGYSGESPGENESSGE). O-linked (Xyl...) (chondroitin sulfate) serine glycans are attached at residues Ser-640 and Ser-644. Asn-664 carries an N-linked (GlcNAc...) asparagine glycan.

The polypeptide is Chondroitin proteoglycan 4 (cpg-4) (Caenorhabditis briggsae).